We begin with the raw amino-acid sequence, 78 residues long: U-scoloptoxin(04)-Er1b (78 aa).

Positions 1 to 24 are cleaved as a signal peptide; it reads MTRHLIFAAVLLVCLFVCWNAVGA. A propeptide spanning residues 25–28 is cleaved from the precursor; that stretch reads QDAR.

Belongs to the scoloptoxin-04 family. Contains 2 disulfide bonds. As to expression, expressed by the venom gland.

Its subcellular location is the secreted. This Ethmostigmus rubripes (Giant centipede) protein is U-scoloptoxin(04)-Er1b.